Here is a 58-residue protein sequence, read N- to C-terminus: Large ribosomal subunit protein bL32 (58 aa).

Belongs to the bacterial ribosomal protein bL32 family.

This is Large ribosomal subunit protein bL32 from Prochlorococcus marinus (strain MIT 9303).